A 332-amino-acid chain; its full sequence is UPF0158 protein TC_0713 (332 aa).

Disordered regions lie at residues 196 to 215 and 291 to 332; these read ALNP…KVEA and LGYD…KARS. Over residues 295-316 the composition is skewed to acidic residues; sequence GDGDASDFFGEEYDDDDDDDDD. The segment covering 320–332 has biased composition (basic residues); sequence KKAAKRGRKKARS.

Belongs to the UPF0158 family.

This chain is UPF0158 protein TC_0713, found in Chlamydia muridarum (strain MoPn / Nigg).